The primary structure comprises 587 residues: Inorganic phosphate transporter 2-1, chloroplastic (587 aa).

The transit peptide at 1–71 (MTLPYRFSSV…VCPLASFSSY (71 aa)) directs the protein to the chloroplast. Residues 74 to 106 (SEGEEQHHADQPIQNPHESSTVSNESDGKGNAE) are disordered. Residues 85-98 (PIQNPHESSTVSNE) are compositionally biased toward polar residues. The next 12 membrane-spanning stretches (helical) occupy residues 127-147 (AISIVIAFSALTLPIFMKSLG), 154-174 (TKLLSYATLLFGFYMAWNIGA), 195-215 (AVMTAAVLEFSGALLMGTHVT), 233-253 (MLLFAGLLSSLAAAGTWLQVA), 265-285 (CIVGSMVGFGLVYGGAGAVFW), 289-309 (AKVASSWVISPILGALVSFLV), 327-347 (AAAAAPVAVFVGVASISSAAL), 352-372 (IFPIALSQALACGVAGAIVFD), 413-433 (LEIVYGIFGYMQVLSACFMSF), 465-485 (IVIPMDVLAWGGFGIVAGLTM), 523-543 (LGLPISATHTLVGAVMGVGFA), and 559-579 (ASWLVTIPVGATLAVIYTWIF).

This sequence belongs to the inorganic phosphate transporter (PiT) (TC 2.A.20.2) family. In terms of tissue distribution, mostly expressed in young green tissues. Present in both auto- and heterotrophic tissues. Also expressed in root stele.

The protein localises to the plastid. It localises to the chloroplast inner membrane. Its function is as follows. Low affinity H(+)/Pi chloroplastic cotransporter. Involved in inorganic phosphate (orthophosphate, Pi) uptake in green parts of plants in Pi-sufficient conditions. Required for Pi retranslocation during Pi deprivation. The polypeptide is Inorganic phosphate transporter 2-1, chloroplastic (PHT2-1) (Arabidopsis thaliana (Mouse-ear cress)).